We begin with the raw amino-acid sequence, 450 residues long: MNKNIIQIYLFVFILLLKQHIVILKNEEFTNPYSIRKKDIKAIVNVNNKLKSINIHKLDNINKKDLLGSYNENYILIKLKKQDIFSKKLSTYYGEVQIGEQSENNMNVLFDTGSSQVWILNDTCKNSLCNNIHSKYKRTKSFVYKYDKKGLPSVIEIFYLSGKIVAFEGYDTIYLGKKLKIPHTNISFATKVDIPILEEFKWDGIIGLGFQNGDSIKRGIKPFLDILKDDKILTNKNYKNQFGYYLSDKEGYITLGGIDNRLKNTPDEEIIWTPVSTEMGYWTIQIMGIRKEYVNNHFEENKEEEEVIVKYEAFHDGGKNSIIDTGTYLIYAPKNTMENYLKDLKINNCDEKYNLPHLIFQIKSDEIKTIKGSAIIEIVLTPNDYVIEYVDKKNNTKECILGIQPDEQSEEDNVDGWTLGQVFLKAYYTIFDKDNLKIGFVRSKRNVTLR.

A signal peptide spans 1–24; sequence MNKNIIQIYLFVFILLLKQHIVIL. The region spanning 92-441 is the Peptidase A1 domain; the sequence is YYGEVQIGEQ…DKDNLKIGFV (350 aa). Catalysis depends on residues Asp111 and Asp324.

This sequence belongs to the peptidase A1 family.

The protein resides in the cytoplasm. The sequence is that of Plasmepsin VII from Plasmodium falciparum (isolate NF54).